We begin with the raw amino-acid sequence, 250 residues long: Probable transcriptional regulatory protein DP2908 (250 aa).

It belongs to the TACO1 family.

Its subcellular location is the cytoplasm. The sequence is that of Probable transcriptional regulatory protein DP2908 from Desulfotalea psychrophila (strain LSv54 / DSM 12343).